The sequence spans 405 residues: Protein lin-11 (405 aa).

Residues Lys17 and Lys18 each participate in a glycyl lysine isopeptide (Lys-Gly) (interchain with G-Cter in SUMO) cross-link. 2 LIM zinc-binding domains span residues 68–124 (CAAC…RRYS) and 127–187 (CAGC…TATK). A compositionally biased stretch (polar residues) spans 189–205 (STPTSIHRPVSNGSECN). Disordered stretches follow at residues 189–208 (STPT…NSDV) and 224–246 (GEGD…GPRT). The segment at residues 241–300 (RRGPRTTIKAKQLETLKNAFAATPKPTRHIREQLAAETGLNMRVIQVWFQNRRSKERRMK) is a DNA-binding region (homeobox).

In terms of tissue distribution, expressed in ADL, AVJL, AIZL, RICL, RIF and AVG neurons.

The protein resides in the nucleus. Its function is as follows. Probable transcription factor which is required for asymmetric division of vulval blast cells. Involved in olfactory plasticity probably by regulating the expression of transcription factor mbr-1 in RIF neurons. Plays a role in the chemorepulsive response toward ascaroside pheromones mediated by the ADL sensory neurons, probably by regulating E-box motif 5'-CANNTG-3' containing target genes in the ADL neurons. Plays a role in the differentiation of the ADL sensory neurons. The chain is Protein lin-11 (lin-11) from Caenorhabditis elegans.